A 363-amino-acid polypeptide reads, in one-letter code: Pyrimidine monooxygenase RutA (363 aa).

FMN contacts are provided by residues isoleucine 49–lysine 50, asparagine 115, glutamate 124, arginine 140–tyrosine 141, and serine 190.

Belongs to the NtaA/SnaA/DszA monooxygenase family. RutA subfamily.

The catalysed reaction is uracil + FMNH2 + NADH + O2 = (Z)-3-ureidoacrylate + FMN + NAD(+) + H2O + H(+). It catalyses the reaction thymine + FMNH2 + NADH + O2 = (Z)-2-methylureidoacrylate + FMN + NAD(+) + H2O + H(+). Functionally, catalyzes the pyrimidine ring opening between N-3 and C-4 by an unusual flavin hydroperoxide-catalyzed mechanism, adding oxygen atoms in the process to yield ureidoacrylate peracid, that immediately reacts with FMN forming ureidoacrylate and FMN-N(5)-oxide. The FMN-N(5)-oxide reacts spontaneously with NADH to produce FMN. Requires the flavin reductase RutF to regenerate FMN in vivo. The sequence is that of Pyrimidine monooxygenase RutA from Enterobacter sp. (strain 638).